Reading from the N-terminus, the 1013-residue chain is Zinc finger and BTB domain-containing protein 4 (1013 aa).

In terms of domain architecture, BTB spans 30–152; that stretch reads CDVTLIAGDT…IYSARLALPG (123 aa). Lysine 40 participates in a covalent cross-link: Glycyl lysine isopeptide (Lys-Gly) (interchain with G-Cter in SUMO2). A compositionally biased stretch (low complexity) spans 67–110; the sequence is LPPATGGAAPNPATTTAASSSSSSSSSSSSSSSSASSSSSSSSS. 2 disordered regions span residues 67–124 and 183–221; these read LPPA…SPPR and DAWVPPTPAPMATSQPEEDSFGPGPRPAGEWEGDRAEAQ. Over residues 111-121 the composition is skewed to pro residues; sequence SPPPASPPASS. An interaction with CBFA2T3 region spans residues 186–348; the sequence is VPPTPAPMAT…CRYCEKVFAL (163 aa). The C2H2-type 1; atypical zinc-finger motif lies at 234–256; it reads LPCPQCGKSFIHPKRLQTHEAQC. The tract at residues 257–281 is disordered; the sequence is RRGASTRGSTGLGAGGAGPGGPAGV. Residues 266 to 279 are compositionally biased toward gly residues; sequence TGLGAGGAGPGGPA. C2H2-type zinc fingers lie at residues 309–331, 337–359, and 365–388; these read YVCAACERSYVTLSSLKRHSNVH, YPCRYCEKVFALAEYRTKHEVWH, and YQCIFCWETFVTYYNLKTHQRAFH. Position 391 is a phosphoserine (serine 391). Disordered stretches follow at residues 428-765, 783-852, 883-904, and 972-1013; these read KTYS…STRF, HGQR…DPII, GREPGGGRGKSGSEGPVGAGEG, and VNPQ…GDVG. The segment covering 453–470 has biased composition (pro residues); the sequence is ASPPPGPPPAPEPGPPPS. 2 stretches are compositionally biased toward low complexity: residues 496-506 and 531-554; these read TASTGGSQAAS and ATPTSPATAVSPATAAGPAMATTT. Residue lysine 573 forms a Glycyl lysine isopeptide (Lys-Gly) (interchain with G-Cter in SUMO2) linkage. Residues 576 to 590 are compositionally biased toward gly residues; the sequence is GGIGGGGGPPTGAGR. Residues 608–625 show a composition bias toward basic and acidic residues; the sequence is IGEEAIVKRRISETDLRP. A Glycyl lysine isopeptide (Lys-Gly) (interchain with G-Cter in SUMO2) cross-link involves residue lysine 615. A coiled-coil region spans residues 627-663; the sequence is ELSGEEMEESEEDEEEEDEEEEEEDEEESKAGGEDQL. Residues 629 to 654 show a composition bias toward acidic residues; sequence SGEEMEESEEDEEEEDEEEEEEDEEE. The span at 678-689 shows a compositional bias: gly residues; sequence AAGGASVGGSGL. 2 consecutive C2H2-type zinc fingers follow at residues 726-748 and 765-787; these read HRCGDCAQTFTTLRKLRKHQEAH and FTCPHCAKVCKTAAALSRHGQRH. 2 positions are modified to phosphothreonine; by HIPK2: threonine 795 and threonine 797. Over residues 836–846 the composition is skewed to low complexity; it reads TAAEEASETAS. A compositionally biased stretch (gly residues) spans 883-902; that stretch reads GREPGGGRGKSGSEGPVGAG. Residues 976 to 995 show a composition bias toward pro residues; sequence AAPPAPPTPPPPTLPPPIPP. Threonine 983 is modified (phosphothreonine; by HIPK2). Positions 997-1013 are enriched in basic and acidic residues; that stretch reads GEGERAGVERTQKGDVG.

As to quaternary structure, interacts with HIPK2. Interacts with CBFA2T3. Interacts with ZBTB38. Phosphorylated by HIPK2. This phosphorylation reduces stability and triggers ZBTB4 protein degradation in response to DNA damage.

The protein localises to the nucleus. It is found in the chromosome. Transcriptional repressor with bimodal DNA-binding specificity. Represses transcription in a methyl-CpG-dependent manner. Binds with a higher affinity to methylated CpG dinucleotides in the consensus sequence 5'-CGCG-3' but can also bind to the non-methylated consensus sequence 5'-CTGCNA-3' also known as the consensus kaiso binding site (KBS). Can also bind specifically to a single methyl-CpG pair and can bind hemimethylated DNA but with a lower affinity compared to methylated DNA. Plays a role in postnatal myogenesis, may be involved in the regulation of satellite cells self-renewal. The polypeptide is Zinc finger and BTB domain-containing protein 4 (ZBTB4) (Homo sapiens (Human)).